Reading from the N-terminus, the 108-residue chain is Transcription factor AmrZ (108 aa).

Functionally, functions both as a transcriptional activator and a repressor of multiple genes encoding virulence factors as well as genes involved in environmental adaptation. Represses genes involved in iron homeostasis. Modulates intracellular levels of c-di-GMP which in turn regulates swimming motility and biofilm formation. This is Transcription factor AmrZ from Pseudomonas ogarae (strain DSM 112162 / CECT 30235 / F113).